Consider the following 791-residue polypeptide: Valine--tRNA ligase (791 aa).

Residues 40 to 50 carry the 'HIGH' region motif; it reads PTVSGKMHMGH. Positions 521–525 match the 'KMSKS' region motif; the sequence is KMSKS. Lysine 524 serves as a coordination point for ATP.

The protein belongs to the class-I aminoacyl-tRNA synthetase family. ValS type 2 subfamily.

Its subcellular location is the cytoplasm. It catalyses the reaction tRNA(Val) + L-valine + ATP = L-valyl-tRNA(Val) + AMP + diphosphate. Its function is as follows. Catalyzes the attachment of valine to tRNA(Val). As ValRS can inadvertently accommodate and process structurally similar amino acids such as threonine, to avoid such errors, it has a 'posttransfer' editing activity that hydrolyzes mischarged Thr-tRNA(Val) in a tRNA-dependent manner. This chain is Valine--tRNA ligase, found in Thermoplasma acidophilum (strain ATCC 25905 / DSM 1728 / JCM 9062 / NBRC 15155 / AMRC-C165).